Consider the following 287-residue polypeptide: Viomycin phosphotransferase (287 aa).

Asp-190 serves as the catalytic Proton acceptor.

This sequence belongs to the aminoglycoside phosphotransferase family.

The enzyme catalyses viomycin + ATP = O-phosphoviomycin + ADP + H(+). In terms of biological role, the aminoglycoside phosphotransferases achieve inactivation of their antibiotic substrates by phosphorylation. This is Viomycin phosphotransferase (vph) from Streptomyces vinaceus.